The primary structure comprises 296 residues: MMFKQYLQVTKPGIIFGNLISVIGGFLLASKGSIDYPLFIYTLVGVSLVVASGCVFNNYIDRDIDRKMERTKNRVLVKGLISPAVSLVYATLLGFAGFMLLWFGANPLACWLGVMGFVVYVGVYSLYMKRHSVYGTLIGSLSGAAPPVIGYCAVTGEFDSGAAILLAIFSLWQMPHSYAIAIFRFKDYQAANIPVLPVVKGISVAKNHITLYIIAFAVATLMLSLGGYAGYKYLVVAAAVSVWWLGMALRGYKVADDRIWARKLFGFSIIAITALSVMMSVDFMVPDSHTLLAAVW.

The Cytoplasmic portion of the chain corresponds to 1–9 (MMFKQYLQV). A helical transmembrane segment spans residues 10 to 28 (TKPGIIFGNLISVIGGFLL). Residues 29–37 (ASKGSIDYP) lie on the Periplasmic side of the membrane. The chain crosses the membrane as a helical span at residues 38–56 (LFIYTLVGVSLVVASGCVF). Residues 57-78 (NNYIDRDIDRKMERTKNRVLVK) are Cytoplasmic-facing. A helical membrane pass occupies residues 79-97 (GLISPAVSLVYATLLGFAG). The Periplasmic portion of the chain corresponds to 98–107 (FMLLWFGANP). A helical membrane pass occupies residues 108–126 (LACWLGVMGFVVYVGVYSL). Topologically, residues 127–197 (YMKRHSVYGT…YQAANIPVLP (71 aa)) are cytoplasmic. The helical transmembrane segment at 198–216 (VVKGISVAKNHITLYIIAF) threads the bilayer. Residues 217–228 (AVATLMLSLGGY) are Periplasmic-facing. A helical transmembrane segment spans residues 229-247 (AGYKYLVVAAAVSVWWLGM). Residues 248–268 (ALRGYKVADDRIWARKLFGFS) are Cytoplasmic-facing. The helical transmembrane segment at 269 to 287 (IIAITALSVMMSVDFMVPD) threads the bilayer. Residues 288–296 (SHTLLAAVW) lie on the Periplasmic side of the membrane.

This sequence belongs to the UbiA prenyltransferase family. Protoheme IX farnesyltransferase subfamily.

It is found in the cell inner membrane. It catalyses the reaction heme b + (2E,6E)-farnesyl diphosphate + H2O = Fe(II)-heme o + diphosphate. Its pathway is porphyrin-containing compound metabolism; heme O biosynthesis; heme O from protoheme: step 1/1. Converts heme B (protoheme IX) to heme O by substitution of the vinyl group on carbon 2 of heme B porphyrin ring with a hydroxyethyl farnesyl side group. The protein is Protoheme IX farnesyltransferase of Shigella sonnei (strain Ss046).